The sequence spans 99 residues: Microcin E492 (99 aa).

A signal peptide spans 1–15 (MREISQKDLNLAFGA). The segment at 80–99 (SWNGSGSGYNSATSSSGSGS) is disordered. The segment covering 87–99 (GYNSATSSSGSGS) has biased composition (low complexity). Serine 99 carries the serine microcin E492 siderophore ester modification.

It belongs to the class IIa microcin family. In terms of assembly, multimer. Possibly forms a homodimer or a homotrimer. Post-translationally, the C-terminal Ser is modified by attachment to a siderophore similar to enterobactin, which can bind one atom of iron. The modification consists of an ester linkage of the serine carboxyl to O6 of a glucose which is linked by a C-glycosidic bond to the 5'-benzoyl of a linear triester of N-(2,3-dihydroxybenzoyl)serine. Presence of the siderophore ester increases the antibacterial activity of the protein.

Functionally, channel-forming bacteriocin. Forms cation-selective channels. Active on enterobacteria, with highest activity against E.coli. Not active on other Gram-negative bacteria, Gram-positive bacteria or fungi. The unmodified protein is active against E.coli and S.enteritidis. When the siderophore ester is present at Ser-99, antibacterial activity against these species is increased and activity is also detected against E.cloacae and K.pneumoniae. Neutralized by its immunity protein MceB. In Klebsiella pneumoniae, this protein is Microcin E492.